A 331-amino-acid chain; its full sequence is Pyruvate synthase subunit PorB (331 aa).

The [4Fe-4S] cluster site is built by C21, C24, C59, and C222.

Heterotetramer of one alpha, one beta, one delta and one gamma chain. Requires [4Fe-4S] cluster as cofactor.

The enzyme catalyses 2 oxidized [2Fe-2S]-[ferredoxin] + pyruvate + CoA = 2 reduced [2Fe-2S]-[ferredoxin] + acetyl-CoA + CO2 + H(+). In Pyrococcus horikoshii (strain ATCC 700860 / DSM 12428 / JCM 9974 / NBRC 100139 / OT-3), this protein is Pyruvate synthase subunit PorB (porB).